Consider the following 389-residue polypeptide: Large envelope protein (389 aa).

N-acetylmethionine is present on M1. A lipid anchor (N-myristoyl glycine; by host) is attached at G2. The tract at residues G2–A108 is pre-S1. The interval G2–N163 is pre-S. Residues G2–G170 are Virion surface; in external conformation-facing. Over G2–R242 the chain is Intravirion; in internal conformation. The segment at T76–D103 is disordered. A compositionally biased stretch (polar residues) spans T86–T95. The interval M109–N163 is pre-S2. A helical membrane pass occupies residues F171–I191. The Intravirion; in external conformation segment spans residues P192 to R242. A helical membrane pass occupies residues F243–Y263. Residues Q264–S337 lie on the Virion surface side of the membrane. N-linked (GlcNAc...) asparagine; by host glycosylation occurs at N309. Residues L338 to I358 form a helical membrane-spanning segment. Over W359–W364 the chain is Intravirion. A helical membrane pass occupies residues G365–A387. Residues Y388–I389 are Virion surface-facing.

The protein belongs to the orthohepadnavirus major surface antigen family. As to quaternary structure, in its internal form (Li-HBsAg), interacts with the capsid protein and with the isoform S. Interacts with host chaperone CANX. In terms of assembly, associates with host chaperone CANX through its pre-S2 N glycan; this association may be essential for isoform M proper secretion. Interacts with isoform L. Interacts with the antigens of satellite virus HDV (HDVAgs); this interaction is required for encapsidation of HDV genomic RNA. In terms of processing, isoform M is N-terminally acetylated by host at a ratio of 90%, and N-glycosylated by host at the pre-S2 region. Post-translationally, myristoylated.

Its subcellular location is the virion membrane. In terms of biological role, the large envelope protein exists in two topological conformations, one which is termed 'external' or Le-HBsAg and the other 'internal' or Li-HBsAg. In its external conformation the protein attaches the virus to cell receptors and thereby initiating infection. This interaction determines the species specificity and liver tropism. This attachment induces virion internalization predominantly through caveolin-mediated endocytosis. The large envelope protein also assures fusion between virion membrane and endosomal membrane. In its internal conformation the protein plays a role in virion morphogenesis and mediates the contact with the nucleocapsid like a matrix protein. Its function is as follows. The middle envelope protein plays an important role in the budding of the virion. It is involved in the induction of budding in a nucleocapsid independent way. In this process the majority of envelope proteins bud to form subviral lipoprotein particles of 22 nm of diameter that do not contain a nucleocapsid. In Homo sapiens (Human), this protein is Large envelope protein.